Reading from the N-terminus, the 717-residue chain is Pre-mRNA-splicing factor ATP-dependent RNA helicase DEAH10 (717 aa).

The interval 1-29 (MPSMAQGELKSFVQNSRPNPKSPTVSPFS) is disordered. The segment covering 12–29 (FVQNSRPNPKSPTVSPFS) has biased composition (polar residues). The Helicase ATP-binding domain maps to 51 to 256 (VEEVQKNDIL…FGGAKAVHVQ (206 aa)). 64-71 (GETGSGKT) lines the ATP pocket. The DEAH box signature appears at 162–165 (DEAH). Positions 278–453 (TLVTIFQIHF…NIILQLKALG (176 aa)) constitute a Helicase C-terminal domain.

It belongs to the DEAD box helicase family. DEAH subfamily. PRP22 sub-subfamily. In terms of tissue distribution, widely expressed but spatially and temporally regulated during development.

The protein resides in the nucleus. It localises to the nucleolus. It carries out the reaction ATP + H2O = ADP + phosphate + H(+). Involved in pre-mRNA splicing. Plays a role during development in processes such as meristem maintenance, leaf morphogenesis and root morphogenesis. The polypeptide is Pre-mRNA-splicing factor ATP-dependent RNA helicase DEAH10 (Arabidopsis thaliana (Mouse-ear cress)).